We begin with the raw amino-acid sequence, 268 residues long: Bis(5'-nucleosyl)-tetraphosphatase, symmetrical (268 aa).

Belongs to the Ap4A hydrolase family.

The catalysed reaction is P(1),P(4)-bis(5'-adenosyl) tetraphosphate + H2O = 2 ADP + 2 H(+). Functionally, hydrolyzes diadenosine 5',5'''-P1,P4-tetraphosphate to yield ADP. The chain is Bis(5'-nucleosyl)-tetraphosphatase, symmetrical from Nitrosomonas europaea (strain ATCC 19718 / CIP 103999 / KCTC 2705 / NBRC 14298).